The sequence spans 323 residues: Transcription initiation factor IIB 7 (323 aa).

Positions 1-16 (MTRSTRQRERETAAKQ) are enriched in basic and acidic residues. The interval 1–35 (MTRSTRQRERETAAKQEEEEDSEEGVRECPECGSD) is disordered. The segment at 24–56 (EGVRECPECGSDNLVKSSDRAELVCNDCGLVVE) adopts a TFIIB-type zinc-finger fold. 4 residues coordinate Zn(2+): Cys29, Cys32, Cys48, and Cys51. Tandem repeats lie at residues 142-225 (SEID…SQEL) and 236-317 (KYVP…EQIE).

Belongs to the TFIIB family.

Functionally, stabilizes TBP binding to an archaeal box-A promoter. Also responsible for recruiting RNA polymerase II to the pre-initiation complex (DNA-TBP-TFIIB). In Halobacterium salinarum (strain ATCC 700922 / JCM 11081 / NRC-1) (Halobacterium halobium), this protein is Transcription initiation factor IIB 7.